Here is a 500-residue protein sequence, read N- to C-terminus: Mucin-like protein 3 (500 aa).

Positions 1 to 27 are cleaved as a signal peptide; the sequence is MAQPTSGLYSTFGFFICLLFFPASWEA. Over 28–429 the chain is Extracellular; sequence GANTFQELQK…GENNSFPVWA (402 aa). Disordered stretches follow at residues 55–198 and 275–324; these read THRA…SQKP and EGKT…PTAS. Residues 58-71 show a composition bias toward basic and acidic residues; it reads ASSDQKTSRQHPPD. A compositionally biased stretch (polar residues) spans 76 to 89; sequence TATQKAKNQCNTTR. Asparagine 108 carries N-linked (GlcNAc...) asparagine glycosylation. Basic and acidic residues-rich tracts occupy residues 111 to 123 and 132 to 142; these read VRHE…EKDL and ARNERSADDPR. N-linked (GlcNAc...) asparagine glycosylation occurs at asparagine 148. Polar residues-rich tracts occupy residues 159-178, 279-289, and 298-324; these read PRRN…TTKS, SPASESSSQAQ, and TSAS…PTAS. The helical transmembrane segment at 430–450 threads the bilayer; it reads IVIVILMAVIILLVFIGLILL. The Cytoplasmic segment spans residues 451–500; the sequence is VSCASRARHVLTQNSEEPEPQPEDKGSRNSYPVYLMEQQNLNLNQIPSPP.

Its subcellular location is the cell membrane. It is found in the cytoplasm. In terms of biological role, may modulate NF-kappaB signaling and play a role in cell growth. In Mus musculus (Mouse), this protein is Mucin-like protein 3.